A 324-amino-acid polypeptide reads, in one-letter code: Tubulin alpha-8 chain (324 aa).

6 residues coordinate GTP: S15, G19, T20, T54, N81, and N103. Residue E129 is part of the active site.

This sequence belongs to the tubulin family. In terms of assembly, dimer of alpha and beta chains. A typical microtubule is a hollow water-filled tube with an outer diameter of 25 nm and an inner diameter of 15 nM. Alpha-beta heterodimers associate head-to-tail to form protofilaments running lengthwise along the microtubule wall with the beta-tubulin subunit facing the microtubule plus end conferring a structural polarity. Microtubules usually have 13 protofilaments but different protofilament numbers can be found in some organisms and specialized cells. Mg(2+) is required as a cofactor. In terms of processing, some glutamate residues at the C-terminus are polyglycylated, resulting in polyglycine chains on the gamma-carboxyl group. Glycylation is mainly limited to tubulin incorporated into axonemes (cilia and flagella) whereas glutamylation is prevalent in neuronal cells, centrioles, axonemes, and the mitotic spindle. Both modifications can coexist on the same protein on adjacent residues, and lowering polyglycylation levels increases polyglutamylation, and reciprocally. The precise function of polyglycylation is still unclear. Some glutamate residues at the C-terminus are polyglutamylated, resulting in polyglutamate chains on the gamma-carboxyl group. Polyglutamylation plays a key role in microtubule severing by spastin (SPAST). SPAST preferentially recognizes and acts on microtubules decorated with short polyglutamate tails: severing activity by SPAST increases as the number of glutamates per tubulin rises from one to eight, but decreases beyond this glutamylation threshold.

It localises to the cytoplasm. It is found in the cytoskeleton. The catalysed reaction is GTP + H2O = GDP + phosphate + H(+). In terms of biological role, tubulin is the major constituent of microtubules, a cylinder consisting of laterally associated linear protofilaments composed of alpha- and beta-tubulin heterodimers. Microtubules grow by the addition of GTP-tubulin dimers to the microtubule end, where a stabilizing cap forms. Below the cap, tubulin dimers are in GDP-bound state, owing to GTPase activity of alpha-tubulin. The polypeptide is Tubulin alpha-8 chain (Gallus gallus (Chicken)).